We begin with the raw amino-acid sequence, 376 residues long: Probable plastid-lipid-associated protein 3, chloroplastic (376 aa).

The N-terminal 53 residues, 1–53 (MATLFTVARPSSLLYVSSINPSKTFSPSISLKLNSLSFSFGYRPKPLRFSKIR), are a transit peptide targeting the chloroplast. Residues 54 to 146 (SSLPSESESE…EADAGNGSAV (93 aa)) are disordered. Polar residues predominate over residues 85–96 (PDSQPDNVTVNV). Residues 117 to 126 (MESDPPRNED) show a composition bias toward basic and acidic residues.

It belongs to the PAP/fibrillin family.

The protein localises to the plastid. Its subcellular location is the chloroplast. It is found in the plastoglobule. Probably involved in light/cold stress-related jasmonate (JA) biosynthesis. The protein is Probable plastid-lipid-associated protein 3, chloroplastic (PAP3) of Arabidopsis thaliana (Mouse-ear cress).